Here is a 109-residue protein sequence, read N- to C-terminus: Spermidine export protein MdtI (109 aa).

The next 4 membrane-spanning stretches (helical) occupy residues 6-26, 36-56, 64-84, and 88-108; these read LQHILWLLLAIGLEIIANIWL, VYGVASLAAVLAAFSALGQAV, AYALWGGFGIAATVAAGWIMF, and LNRKGWAGLGLLLVGMVIIKL.

It belongs to the drug/metabolite transporter (DMT) superfamily. Small multidrug resistance (SMR) (TC 2.A.7.1) family. MdtI subfamily. In terms of assembly, forms a complex with MdtJ.

Its subcellular location is the cell inner membrane. Functionally, catalyzes the excretion of spermidine. The chain is Spermidine export protein MdtI (mdtI) from Cronobacter sakazakii (strain ATCC BAA-894) (Enterobacter sakazakii).